The following is a 407-amino-acid chain: UPF0761 membrane protein AZOSEA40600 (407 aa).

Helical transmembrane passes span S29–F49, G92–I112, L132–A152, F174–V194, G207–V227, and F239–G259.

The protein belongs to the UPF0761 family.

It is found in the cell inner membrane. The chain is UPF0761 membrane protein AZOSEA40600 from Aromatoleum aromaticum (strain DSM 19018 / LMG 30748 / EbN1) (Azoarcus sp. (strain EbN1)).